The sequence spans 630 residues: uncharacterized protein (630 aa).

The next 2 helical transmembrane spans lie at 8–28 (LFNM…ASAV) and 258–278 (VDNS…PLVI). Residues 399–426 (EETSKPTEQPSPADSTSTPAAPEKGAAS) form a disordered region. Over residues 404–417 (PTEQPSPADSTSTP) the composition is skewed to polar residues.

This sequence belongs to the peptidase S1C family.

It localises to the cell membrane. This is an uncharacterized protein from Sinorhizobium fredii (strain NBRC 101917 / NGR234).